The sequence spans 390 residues: Chorismate synthase 1 (390 aa).

Positions 39 and 45 each coordinate NADP(+). The tract at residues 95–117 (EQEEKEMKRKVTKPRPGHADLNG) is disordered. Residues 132 to 134 (RSS), 253 to 254 (NA), Gly-298, 313 to 317 (KPIPT), and Arg-339 contribute to the FMN site.

Belongs to the chorismate synthase family. Homotetramer. Requires FMNH2 as cofactor.

The catalysed reaction is 5-O-(1-carboxyvinyl)-3-phosphoshikimate = chorismate + phosphate. It participates in metabolic intermediate biosynthesis; chorismate biosynthesis; chorismate from D-erythrose 4-phosphate and phosphoenolpyruvate: step 7/7. Functionally, catalyzes the anti-1,4-elimination of the C-3 phosphate and the C-6 proR hydrogen from 5-enolpyruvylshikimate-3-phosphate (EPSP) to yield chorismate, which is the branch point compound that serves as the starting substrate for the three terminal pathways of aromatic amino acid biosynthesis. This reaction introduces a second double bond into the aromatic ring system. This Bacillus cereus (strain ATCC 10987 / NRS 248) protein is Chorismate synthase 1.